Here is a 262-residue protein sequence, read N- to C-terminus: Glycerol uptake facilitator protein (262 aa).

At 1-7 the chain is on the cytoplasmic side; that stretch reads MNFCSKK. The helical transmembrane segment at 8 to 36 threads the bilayer; sequence KILKQCFFEFLGTGLIIFLGISSLVVSKL. Residues 37–41 are Extracellular-facing; the sequence is TNFHF. The helical transmembrane segment at 42 to 62 threads the bilayer; sequence NHCEISCIWGLGVFISICFCS. At 63–65 the chain is on the cytoplasmic side; sequence SVS. Residues 66–69 lie within the membrane without spanning it; sequence GAHL. The short motif at 70 to 72 is the NPA 1 element; the sequence is NPA. The segment at residues 70 to 80 is an intramembrane region (helical); that stretch reads NPAITIFLFLS. Residues 81-86 lie on the Cytoplasmic side of the membrane; that stretch reads SQFNKK. Residues 87–110 traverse the membrane as a helical segment; that stretch reads KVIPYILSQISGTFFFTFLIYLIF. The Extracellular portion of the chain corresponds to 111–145; the sequence is NNLLNSFESKYNIVRGTKKSLELASLFCVFPKENY. Residues 146–171 traverse the membrane as a helical segment; it reads NFIHDFILEILIGIIFIIILMKLSEK. At 172–180 the chain is on the cytoplasmic side; that stretch reads NNLFKFYKF. Residues 181–197 form a helical membrane-spanning segment; that stretch reads INPFLIGTLVIIINLFL. At 198–201 the chain is on the extracellular side; that stretch reads TSYS. Residues 202-205 lie within the membrane without spanning it; it reads NITL. The NPA 2 motif lies at 206 to 208; that stretch reads NPA. The segment at residues 206-219 is an intramembrane region (helical); it reads NPARDLGPRIFLSL. Residues 220-234 lie on the Extracellular side of the membrane; sequence IGWGKLAFTGDDNII. The chain crosses the membrane as a helical span at residues 235-259; sequence FPYFLIPTIAPIIGINLGGWIYILY. Residues 260–262 are Cytoplasmic-facing; that stretch reads IKK.

This sequence belongs to the MIP/aquaporin (TC 1.A.8) family.

It localises to the cell membrane. The catalysed reaction is glycerol(in) = glycerol(out). Mediates glycerol diffusion across the cytoplasmic membrane via a pore-type mechanism. The protein is Glycerol uptake facilitator protein (glpF) of Buchnera aphidicola subsp. Schizaphis graminum (strain Sg).